Consider the following 469-residue polypeptide: 3-isopropylmalate dehydratase large subunit 2 (469 aa).

Residues Cys347, Cys408, and Cys411 each coordinate [4Fe-4S] cluster.

It belongs to the aconitase/IPM isomerase family. LeuC type 1 subfamily. As to quaternary structure, heterodimer of LeuC and LeuD. Requires [4Fe-4S] cluster as cofactor.

The enzyme catalyses (2R,3S)-3-isopropylmalate = (2S)-2-isopropylmalate. It participates in amino-acid biosynthesis; L-leucine biosynthesis; L-leucine from 3-methyl-2-oxobutanoate: step 2/4. Its function is as follows. Catalyzes the isomerization between 2-isopropylmalate and 3-isopropylmalate, via the formation of 2-isopropylmaleate. This is 3-isopropylmalate dehydratase large subunit 2 from Mannheimia succiniciproducens (strain KCTC 0769BP / MBEL55E).